The sequence spans 501 residues: 7-alpha-hydroxycholest-4-en-3-one 12-alpha-hydroxylase (501 aa).

The chain crosses the membrane as a helical span at residues 1–21; sequence MVLWGPVLGALLVVIAGYLCL. Position 326 is a phosphoserine (Ser326). Cys440 contributes to the heme binding site.

This sequence belongs to the cytochrome P450 family. Heme is required as a cofactor. Liver.

The protein localises to the endoplasmic reticulum membrane. It localises to the microsome membrane. The catalysed reaction is 7alpha-hydroxycholest-4-en-3-one + reduced [NADPH--hemoprotein reductase] + O2 = 7alpha,12alpha-dihydroxycholest-4-en-3-one + oxidized [NADPH--hemoprotein reductase] + H2O + H(+). It catalyses the reaction 5beta-cholestane-3alpha,7alpha-diol + reduced [NADPH--hemoprotein reductase] + O2 = 5beta-cholestane-3alpha,7alpha,12alpha-triol + oxidized [NADPH--hemoprotein reductase] + H2O + H(+). The enzyme catalyses chenodeoxycholate + reduced [NADPH--hemoprotein reductase] + O2 = cholate + oxidized [NADPH--hemoprotein reductase] + H2O + H(+). The protein operates within lipid metabolism; bile acid biosynthesis. In terms of biological role, a cytochrome P450 monooxygenase involved in primary bile acid biosynthesis. Catalyzes the 12alpha-hydroxylation of 7alpha-hydroxy-4-cholesten-3-one, an intermediate metabolite in cholic acid biosynthesis. Controls biliary balance of cholic acid and chenodeoxycholic acid, ultimately regulating the intestinal absorption of dietary lipids. Mechanistically, uses molecular oxygen inserting one oxygen atom into a substrate, and reducing the second into a water molecule, with two electrons provided by NADPH via cytochrome P450 reductase (CPR; NADPH--hemoprotein reductase). The polypeptide is 7-alpha-hydroxycholest-4-en-3-one 12-alpha-hydroxylase (Homo sapiens (Human)).